Reading from the N-terminus, the 215-residue chain is uncharacterized protein (215 aa).

Helical transmembrane passes span 21–40, 50–69, 95–117, 122–144, 157–179, and 185–207; these read IIKY…VLIN, LIFS…TIIF, FVAI…YVFF, LEIA…LVVL, NFVG…LILQ, and LIFI…SAYL.

The protein belongs to the CcmB/CycW/HelB family.

The protein resides in the cell membrane. This is an uncharacterized protein from Rickettsia prowazekii (strain Madrid E).